Reading from the N-terminus, the 553-residue chain is Probable malate:quinone oxidoreductase (553 aa).

Positions 524 to 553 (PPPKIDVNTPSQATGTAPARPAKASADMAL) are disordered.

The protein belongs to the MQO family. The cofactor is FAD.

It carries out the reaction (S)-malate + a quinone = a quinol + oxaloacetate. It participates in carbohydrate metabolism; tricarboxylic acid cycle; oxaloacetate from (S)-malate (quinone route): step 1/1. The polypeptide is Probable malate:quinone oxidoreductase (Burkholderia lata (strain ATCC 17760 / DSM 23089 / LMG 22485 / NCIMB 9086 / R18194 / 383)).